The primary structure comprises 465 residues: Ribulose bisphosphate carboxylase large chain (465 aa).

Lys-4 is subject to N6,N6,N6-trimethyllysine. 2 residues coordinate substrate: Asn-113 and Thr-163. Catalysis depends on Lys-165, which acts as the Proton acceptor. Lys-167 serves as a coordination point for substrate. Lys-191, Asp-193, and Glu-194 together coordinate Mg(2+). Position 191 is an N6-carboxylysine (Lys-191). His-284 acts as the Proton acceptor in catalysis. The substrate site is built by Arg-285, His-317, and Ser-369.

The protein belongs to the RuBisCO large chain family. Type I subfamily. As to quaternary structure, heterohexadecamer of 8 large chains and 8 small chains; disulfide-linked. The disulfide link is formed within the large subunit homodimers. The cofactor is Mg(2+). Post-translationally, the disulfide bond which can form in the large chain dimeric partners within the hexadecamer appears to be associated with oxidative stress and protein turnover.

The protein resides in the plastid. It is found in the chloroplast. It catalyses the reaction 2 (2R)-3-phosphoglycerate + 2 H(+) = D-ribulose 1,5-bisphosphate + CO2 + H2O. The catalysed reaction is D-ribulose 1,5-bisphosphate + O2 = 2-phosphoglycolate + (2R)-3-phosphoglycerate + 2 H(+). RuBisCO catalyzes two reactions: the carboxylation of D-ribulose 1,5-bisphosphate, the primary event in carbon dioxide fixation, as well as the oxidative fragmentation of the pentose substrate in the photorespiration process. Both reactions occur simultaneously and in competition at the same active site. This is Ribulose bisphosphate carboxylase large chain from Securidaca diversifolia (Easter flower).